We begin with the raw amino-acid sequence, 457 residues long: Prenyltransferase ucdE (457 aa).

Dimethylallyl diphosphate contacts are provided by arginine 106, lysine 198, lysine 277, tyrosine 279, tyrosine 382, tyrosine 447, and tyrosine 451.

This sequence belongs to the tryptophan dimethylallyltransferase family.

The protein operates within secondary metabolite biosynthesis. Nonribosomal peptide synthetase that mediates the biosynthesis of usterphenyllins and uscandidusins, p-terphenyl derivatives. Within the pathway, ucdE prenylates position C-5 of ring A of 3,15-dihydroxyterphenyllin to produce forms usterphenyllin B. UcdE further prenylates position C-14 of ring C of usterphenyllin B to form usterphenyllin A. The pathway begin with the biosynthesis of 4-hydroxyphenylpyruvate (HPPA) from L-tyrosine, possibly by the aminotransferase ucdG. The nonribosomal peptide synthetase ucdA then condenses two HPPA units to produce atromentin. The key step in this pathway is the reduction and dehydration of atromentin to form a terphenyl triol intermediate, performed by the NAD-dependent dehydrogenase ucdB. Further O-methylation by the methyltransferase ucdC forms terphenyllin carrying two methoxy moieties at C-9 and C-12, and subsequent dihydroxylation at C-3 of ring A and C-15 of ring C by the flavin-dependent oxygenase ucdD leads to 3,15-dihydroxyterphenyllin. Prenylation by ucdE at position C-5 of ring A forms usterphenyllin B, and is followed by a second prenylation at position C-14 of ring C to form usterphenyllin A. The following furan ring formation that leads to uscandidusins A and B was proven to be an unexpected spontaneous non-enzymatic reaction. The chain is Prenyltransferase ucdE from Aspergillus ustus.